A 210-amino-acid chain; its full sequence is Glutathione S-transferase P 1 (210 aa).

The 80-residue stretch at 1 to 80 folds into the GST N-terminal domain; sequence PEYTIIYFNA…LLARNHDLYG (80 aa). Residues tyrosine 7, arginine 13, tryptophan 38, lysine 44, 51 to 52, and 64 to 65 each bind glutathione; these read QL and QS. The GST C-terminal domain maps to 82–203; it reads NPREASLIDM…SSDAHKKRPI (122 aa).

Belongs to the GST superfamily. Pi family. In terms of assembly, homodimer.

The protein localises to the cytoplasm. The protein resides in the mitochondrion. It localises to the nucleus. It carries out the reaction RX + glutathione = an S-substituted glutathione + a halide anion + H(+). Conjugation of reduced glutathione to a wide number of exogenous and endogenous hydrophobic electrophiles. The sequence is that of Glutathione S-transferase P 1 from Bufo bufo (European toad).